The primary structure comprises 478 residues: Poly(A) RNA polymerase cid11 (478 aa).

The Mg(2+) site is built by Asp106 and Asp108. Residues 263–317 (SLGRLLIDFFYYYGFSFNYLDSVVSVRSGTVLNKQEKGWAMEVNNSLCVEEPFNT) enclose the PAP-associated domain. The segment at 428 to 447 (QSYENKANRDSDFQGQTSLT) is disordered.

It belongs to the DNA polymerase type-B-like family. Requires Mg(2+) as cofactor. Mn(2+) is required as a cofactor.

The protein localises to the cytoplasm. It localises to the nucleus. It carries out the reaction RNA(n) + ATP = RNA(n)-3'-adenine ribonucleotide + diphosphate. This is Poly(A) RNA polymerase cid11 (cid11) from Schizosaccharomyces pombe (strain 972 / ATCC 24843) (Fission yeast).